Here is a 335-residue protein sequence, read N- to C-terminus: ATP-dependent 6-phosphofructokinase (335 aa).

Gly11 provides a ligand contact to ATP. 21 to 25 (RAVVR) is a binding site for ADP. ATP contacts are provided by residues 72–73 (RY) and 102–105 (GDGS). Asp103 contacts Mg(2+). 125–127 (TID) provides a ligand contact to substrate. The Proton acceptor role is filled by Asp127. Arg154 serves as a coordination point for ADP. Substrate contacts are provided by residues Arg162 and 169–171 (MGR). ADP is bound by residues 185-187 (GAD) and 213-215 (KKH). Substrate contacts are provided by residues Glu222, Arg244, and 250 to 253 (HIQR).

The protein belongs to the phosphofructokinase type A (PFKA) family. ATP-dependent PFK group I subfamily. Prokaryotic clade 'B1' sub-subfamily. In terms of assembly, homotetramer. Mg(2+) is required as a cofactor.

It localises to the cytoplasm. The enzyme catalyses beta-D-fructose 6-phosphate + ATP = beta-D-fructose 1,6-bisphosphate + ADP + H(+). The protein operates within carbohydrate degradation; glycolysis; D-glyceraldehyde 3-phosphate and glycerone phosphate from D-glucose: step 3/4. Its activity is regulated as follows. Allosterically activated by ADP and other diphosphonucleosides, and allosterically inhibited by phosphoenolpyruvate. Functionally, catalyzes the phosphorylation of D-fructose 6-phosphate to fructose 1,6-bisphosphate by ATP, the first committing step of glycolysis. This chain is ATP-dependent 6-phosphofructokinase, found in Streptococcus pneumoniae serotype 19F (strain G54).